The primary structure comprises 610 residues: Glutamine--fructose-6-phosphate aminotransferase [isomerizing] (610 aa).

C2 (nucleophile; for GATase activity) is an active-site residue. The Glutamine amidotransferase type-2 domain occupies 2 to 218 (CGIVGAVAQR…EGDVAEITRR (217 aa)). SIS domains are found at residues 286 to 426 (AVEI…QQNR) and 459 to 600 (LAPD…VDQP). The For Fru-6P isomerization activity role is filled by K605.

In terms of assembly, homodimer.

Its subcellular location is the cytoplasm. It carries out the reaction D-fructose 6-phosphate + L-glutamine = D-glucosamine 6-phosphate + L-glutamate. Functionally, catalyzes the first step in hexosamine metabolism, converting fructose-6P into glucosamine-6P using glutamine as a nitrogen source. This is Glutamine--fructose-6-phosphate aminotransferase [isomerizing] from Aliivibrio fischeri (strain ATCC 700601 / ES114) (Vibrio fischeri).